Consider the following 546-residue polypeptide: Probable Xaa-Pro aminopeptidase pepP (546 aa).

Mn(2+) is bound by residues aspartate 341, aspartate 352, glutamate 475, and glutamate 515.

The protein belongs to the peptidase M24B family. It depends on Mn(2+) as a cofactor.

The enzyme catalyses Release of any N-terminal amino acid, including proline, that is linked to proline, even from a dipeptide or tripeptide.. Its function is as follows. Catalyzes the removal of a penultimate prolyl residue from the N-termini of peptides. This is Probable Xaa-Pro aminopeptidase pepP (pepP) from Sclerotinia sclerotiorum (strain ATCC 18683 / 1980 / Ss-1) (White mold).